Reading from the N-terminus, the 235-residue chain is Urease accessory protein UreF (235 aa).

The protein belongs to the UreF family. In terms of assembly, ureD, UreF and UreG form a complex that acts as a GTP-hydrolysis-dependent molecular chaperone, activating the urease apoprotein by helping to assemble the nickel containing metallocenter of UreC. The UreE protein probably delivers the nickel.

The protein resides in the cytoplasm. In terms of biological role, required for maturation of urease via the functional incorporation of the urease nickel metallocenter. In Ureaplasma parvum serovar 3 (strain ATCC 27815 / 27 / NCTC 11736), this protein is Urease accessory protein UreF.